The chain runs to 208 residues: Large ribosomal subunit protein uL3 (208 aa).

Positions 126–150 (NQSRGPMAHGSRYHRRPGSMGPVAP) are disordered.

Belongs to the universal ribosomal protein uL3 family. As to quaternary structure, part of the 50S ribosomal subunit. Forms a cluster with proteins L14 and L19.

Its function is as follows. One of the primary rRNA binding proteins, it binds directly near the 3'-end of the 23S rRNA, where it nucleates assembly of the 50S subunit. This chain is Large ribosomal subunit protein uL3, found in Exiguobacterium sibiricum (strain DSM 17290 / CCUG 55495 / CIP 109462 / JCM 13490 / 255-15).